The sequence spans 369 residues: Peptide chain release factor 2 (369 aa).

An N5-methylglutamine modification is found at Gln251.

This sequence belongs to the prokaryotic/mitochondrial release factor family. Methylated by PrmC. Methylation increases the termination efficiency of RF2.

The protein resides in the cytoplasm. Functionally, peptide chain release factor 2 directs the termination of translation in response to the peptide chain termination codons UGA and UAA. The chain is Peptide chain release factor 2 from Campylobacter fetus subsp. fetus (strain 82-40).